The following is a 598-amino-acid chain: Mitogen-activated protein kinase 19 (598 aa).

In terms of domain architecture, Protein kinase spans 25–316; sequence YRILEVIGKG…AAEALADPYF (292 aa). ATP is bound by residues 31 to 39 and Lys-54; that span reads IGKGSYGVV. Asp-151 (proton acceptor) is an active-site residue. The residue at position 187 (Thr-187) is a Phosphothreonine. Residues 187–189 carry the TXY motif; it reads TDY. Phosphotyrosine is present on Tyr-189. Position 192 is a phosphothreonine (Thr-192). The interval 396-486 is disordered; that stretch reads GKSGPVIPPD…VTYENDRNLK (91 aa). Low complexity predominate over residues 414 to 425; the sequence is SAVHSSAVNSNA.

It belongs to the protein kinase superfamily. CMGC Ser/Thr protein kinase family. MAP kinase subfamily. Post-translationally, dually phosphorylated on Thr-187 and Tyr-189, which activates the enzyme.

The enzyme catalyses L-seryl-[protein] + ATP = O-phospho-L-seryl-[protein] + ADP + H(+). The catalysed reaction is L-threonyl-[protein] + ATP = O-phospho-L-threonyl-[protein] + ADP + H(+). Activated by threonine and tyrosine phosphorylation. In Arabidopsis thaliana (Mouse-ear cress), this protein is Mitogen-activated protein kinase 19 (MPK19).